Reading from the N-terminus, the 400-residue chain is Lysophospholipid transporter LplT (400 aa).

11 helical membrane-spanning segments follow: residues 19–39, 53–73, 91–111, 139–159, 164–184, 227–247, 257–277, 281–301, 304–324, 352–372, and 373–393; these read VIVA…ATLA, VLQM…GQIA, AGAA…LVGI, LMEA…GVLA, IAAL…NLFI, LFWG…PVAL, YLNA…AKLV, TVSR…IFSL, ALLP…FFVV, NSAM…GVPA, and VAIG…LWIW.

Belongs to the major facilitator superfamily. LplT (TC 2.A.1.42) family.

The protein localises to the cell inner membrane. In terms of biological role, catalyzes the facilitated diffusion of 2-acyl-glycero-3-phosphoethanolamine (2-acyl-GPE) into the cell. This Salmonella gallinarum (strain 287/91 / NCTC 13346) protein is Lysophospholipid transporter LplT.